We begin with the raw amino-acid sequence, 102 residues long: MLFLDSYSLLIQFQRFKNWESPRRFSSSFPLLLFVFKPIFAAKLLKEICSSGVLSYSLSFLKIPLSVMRVILGPLPDDKKLKNDAKYSFMNYFIITCIGIIM.

Residues 1–41 (MLFLDSYSLLIQFQRFKNWESPRRFSSSFPLLLFVFKPIFA) form the signal peptide.

This is an uncharacterized protein from Saccharomyces cerevisiae (strain ATCC 204508 / S288c) (Baker's yeast).